The primary structure comprises 433 residues: ATP-dependent protease ATPase subunit HslU (433 aa).

ATP is bound by residues V18, 60-65 (GVGKTE), D246, E311, and R383.

This sequence belongs to the ClpX chaperone family. HslU subfamily. As to quaternary structure, a double ring-shaped homohexamer of HslV is capped on each side by a ring-shaped HslU homohexamer. The assembly of the HslU/HslV complex is dependent on binding of ATP.

It is found in the cytoplasm. Functionally, ATPase subunit of a proteasome-like degradation complex; this subunit has chaperone activity. The binding of ATP and its subsequent hydrolysis by HslU are essential for unfolding of protein substrates subsequently hydrolyzed by HslV. HslU recognizes the N-terminal part of its protein substrates and unfolds these before they are guided to HslV for hydrolysis. The protein is ATP-dependent protease ATPase subunit HslU of Rhodopseudomonas palustris (strain HaA2).